Consider the following 1034-residue polypeptide: Vacuolar membrane protease (1034 aa).

The Cytoplasmic portion of the chain corresponds to 1–11 (MAVKNPFGFTT). Residues 12–32 (GPVTFWLIVVYAAFLIPLVWI) form a helical membrane-spanning segment. Residues 33–418 (HESVPAVPSS…GFAILELRGL (386 aa)) are Vacuolar-facing. Residues N51 and N141 are each glycosylated (N-linked (GlcNAc...) asparagine). The Zn(2+) site is built by H200 and D212. Catalysis depends on E246, which acts as the Proton acceptor. 3 residues coordinate Zn(2+): E247, E272, and H345. A helical transmembrane segment spans residues 419-439 (FAWTLTLLIVSPLVLALVTYI). At 440-470 (LSRKDKYYFFSRKVTADEDDEPVSVGGWKGF) the chain is on the cytoplasmic side. The helical transmembrane segment at 471 to 491 (FRFPFALVLSASITVLSAFLI) threads the bilayer. Residues 492–497 (RRVNPH) lie on the Vacuolar side of the membrane. Residues 498-518 (IIYSSPYAVWAMTLSLFFLVF) traverse the membrane as a helical segment. Residues 519 to 536 (WTIAKGASVVRPSALQRG) are Cytoplasmic-facing. The helical transmembrane segment at 537–557 (YAHIWLFVISWVILVAVTAAA) threads the bilayer. At 558 to 567 (DRFKIASGYP) the chain is on the vacuolar side. The helical transmembrane segment at 568–588 (FAFFHSAVFVSALISLCDLFA) threads the bilayer. The Cytoplasmic portion of the chain corresponds to 589–703 (LPSKQEFARN…NLPSWTWFFQ (115 aa)). Positions 623 to 653 (HSHVEDDVAEEPTETTPLRSGENGNGNNGTI) are disordered. Residues 704–724 (LLLLAPITITVFLQIALFIVS) traverse the membrane as a helical segment. Residues 725 to 736 (AIHSAAADGNDP) are Vacuolar-facing. Residues 737–757 (ILVYAAIAAFSIIILLPATPF) form a helical membrane-spanning segment. At 758–762 (IHRAS) the chain is on the cytoplasmic side. The helical transmembrane segment at 763 to 783 (FYLPLFLLLVFFVTLIYNLVA) threads the bilayer. Residues 784–1034 (FPFSAENRLK…LVEGRKKFRA (251 aa)) are Vacuolar-facing. 3 N-linked (GlcNAc...) asparagine glycosylation sites follow: N805, N866, and N879.

Belongs to the peptidase M28 family. Zn(2+) serves as cofactor.

The protein resides in the vacuole membrane. Functionally, may be involved in vacuolar sorting and osmoregulation. The chain is Vacuolar membrane protease from Colletotrichum graminicola (strain M1.001 / M2 / FGSC 10212) (Maize anthracnose fungus).